The chain runs to 214 residues: Holliday junction branch migration complex subunit RuvA (214 aa).

Residues 1–63 (MISFLRGTVA…EDSLTLFGFS (63 aa)) form a domain I region. Positions 64–142 (SDDEREVFDV…PHGTGAAAAP (79 aa)) are domain II. A flexible linker region spans residues 143-153 (AAAASAPWKPQ). Residues 153 to 214 (QVVAAMTSLG…RAGNRVGSRG (62 aa)) are domain III.

The protein belongs to the RuvA family. As to quaternary structure, homotetramer. Forms an RuvA(8)-RuvB(12)-Holliday junction (HJ) complex. HJ DNA is sandwiched between 2 RuvA tetramers; dsDNA enters through RuvA and exits via RuvB. An RuvB hexamer assembles on each DNA strand where it exits the tetramer. Each RuvB hexamer is contacted by two RuvA subunits (via domain III) on 2 adjacent RuvB subunits; this complex drives branch migration. In the full resolvosome a probable DNA-RuvA(4)-RuvB(12)-RuvC(2) complex forms which resolves the HJ.

It localises to the cytoplasm. In terms of biological role, the RuvA-RuvB-RuvC complex processes Holliday junction (HJ) DNA during genetic recombination and DNA repair, while the RuvA-RuvB complex plays an important role in the rescue of blocked DNA replication forks via replication fork reversal (RFR). RuvA specifically binds to HJ cruciform DNA, conferring on it an open structure. The RuvB hexamer acts as an ATP-dependent pump, pulling dsDNA into and through the RuvAB complex. HJ branch migration allows RuvC to scan DNA until it finds its consensus sequence, where it cleaves and resolves the cruciform DNA. This chain is Holliday junction branch migration complex subunit RuvA, found in Arthrobacter sp. (strain FB24).